The sequence spans 223 residues: Urease accessory protein UreF (223 aa).

The protein belongs to the UreF family. As to quaternary structure, ureD, UreF and UreG form a complex that acts as a GTP-hydrolysis-dependent molecular chaperone, activating the urease apoprotein by helping to assemble the nickel containing metallocenter of UreC. The UreE protein probably delivers the nickel.

It is found in the cytoplasm. Its function is as follows. Required for maturation of urease via the functional incorporation of the urease nickel metallocenter. The sequence is that of Urease accessory protein UreF from Pseudomonas paraeruginosa (strain DSM 24068 / PA7) (Pseudomonas aeruginosa (strain PA7)).